Reading from the N-terminus, the 294-residue chain is UPF0761 membrane protein MADE_1017605/MADE_1018330 (294 aa).

6 consecutive transmembrane segments (helical) span residues 45-65 (LLSL…FPAF), 99-119 (ASQM…MLIS), 141-161 (FAIY…SVVV), 182-202 (FLLS…LYMV), 213-233 (AFVG…GFAL), and 247-267 (ALAV…IVLF).

It belongs to the UPF0761 family.

It localises to the cell inner membrane. The sequence is that of UPF0761 membrane protein MADE_1017605/MADE_1018330 from Alteromonas mediterranea (strain DSM 17117 / CIP 110805 / LMG 28347 / Deep ecotype).